We begin with the raw amino-acid sequence, 229 residues long: Ribonuclease 3 (229 aa).

One can recognise an RNase III domain in the interval 4–133; the sequence is WEELQESVGF…FIGALYLDNG (130 aa). Residue Glu46 coordinates Mg(2+). Asp50 is a catalytic residue. 2 residues coordinate Mg(2+): Asp119 and Glu122. Glu122 is a catalytic residue. One can recognise a DRBM domain in the interval 159-228; it reads DYKTQLQEIV…AQFAINQLTH (70 aa).

The protein belongs to the ribonuclease III family. In terms of assembly, homodimer. It depends on Mg(2+) as a cofactor.

The protein localises to the cytoplasm. It carries out the reaction Endonucleolytic cleavage to 5'-phosphomonoester.. Digests double-stranded RNA. Involved in the processing of primary rRNA transcript to yield the immediate precursors to the large and small rRNAs (23S and 16S). Processes some mRNAs, and tRNAs when they are encoded in the rRNA operon. Processes pre-crRNA and tracrRNA of type II CRISPR loci if present in the organism. This is Ribonuclease 3 from Listeria monocytogenes serotype 4a (strain HCC23).